We begin with the raw amino-acid sequence, 363 residues long: Chorismate synthase (363 aa).

Residues Arg-48 and Arg-54 each coordinate NADP(+). FMN contacts are provided by residues 125–127, 237–238, Gly-277, 292–296, and Arg-318; these read RSS, NA, and KPTSS.

The protein belongs to the chorismate synthase family. Homotetramer. The cofactor is FMNH2.

It carries out the reaction 5-O-(1-carboxyvinyl)-3-phosphoshikimate = chorismate + phosphate. Its pathway is metabolic intermediate biosynthesis; chorismate biosynthesis; chorismate from D-erythrose 4-phosphate and phosphoenolpyruvate: step 7/7. Catalyzes the anti-1,4-elimination of the C-3 phosphate and the C-6 proR hydrogen from 5-enolpyruvylshikimate-3-phosphate (EPSP) to yield chorismate, which is the branch point compound that serves as the starting substrate for the three terminal pathways of aromatic amino acid biosynthesis. This reaction introduces a second double bond into the aromatic ring system. The chain is Chorismate synthase from Stutzerimonas stutzeri (strain A1501) (Pseudomonas stutzeri).